Here is a 759-residue protein sequence, read N- to C-terminus: Na(+)/H(+) exchanger beta (759 aa).

Residues 1-14 (MPAFSCAFPGCRRD) lie on the Cytoplasmic side of the membrane. A helical transmembrane segment spans residues 15–34 (LLVIVLVVFVGIGLPIEASA). Residues 35–75 (PAYQSHGTEGSHLTNITNTKKAFPVLAVNYEHVRKPFEIAL) lie on the Extracellular side of the membrane. Asn-49 carries N-linked (GlcNAc...) asparagine glycosylation. Residues 76-95 (WILLALLMKLGFHLIPRLSA) traverse the membrane as a helical segment. The Cytoplasmic portion of the chain corresponds to 96–97 (VV). Residues 98-117 (PESCLLIVVGLLVGGLIKVI) form a helical membrane-spanning segment. The Extracellular segment spans residues 118–122 (GEEPP). The chain crosses the membrane as a helical span at residues 123-142 (VLDSQLFFLCLLPPIILDAG). Over 143 to 149 (YFLPIRP) the chain is Cytoplasmic. The helical transmembrane segment at 150–169 (FTENVGTILVFAVIGTLWNA) threads the bilayer. Over 170 to 195 (FFMGGLLYALCQIESVGLSGVDLLAC) the chain is Extracellular. The chain crosses the membrane as a helical span at residues 196–214 (LLFGSIVSAVDPVAVLAVF). Residues 215 to 225 (EEIHINELVHI) are Cytoplasmic-facing. The helical transmembrane segment at 226–244 (LVFGESLLNDAVTVVLYNL) threads the bilayer. At 245–261 (FEEFSKVGTVTVLDVFL) the chain is on the extracellular side. Residues 262–282 (GVVCFFVVSLGGVLVGAIYGF) form a helical membrane-spanning segment. The Cytoplasmic portion of the chain corresponds to 283-311 (LAAFTSRFTSHTRVIEPLFVFLYSYMAYL). The chain crosses the membrane as a helical span at residues 312-330 (SSEMFHLSGIMALIACGVV). The Extracellular segment spans residues 331–352 (MRPYVEANISHKSYTTIKYFLK). Asn-338 is a glycosylation site (N-linked (GlcNAc...) asparagine). Residues 353–372 (MWSSVSETLIFIFLGVSTVA) form a helical membrane-spanning segment. Topologically, residues 373-376 (GPHA) are cytoplasmic. A helical membrane pass occupies residues 377-398 (WNWTFVITTVILCLVSRVLGVI). At 399–446 (GLTFIINKFRIVKLTKKDQFIVAYGGLRGAIAFSLGYLLSNSHQMRNL) the chain is on the extracellular side. A helical transmembrane segment spans residues 447–467 (FLTAIITVIFFTVFVQGMTIR). Topologically, residues 468 to 759 (PLVELLAVKK…KEDDDPFMSC (292 aa)) are cytoplasmic. Residues Ser-641 and Ser-648 each carry the phosphoserine; by PKA modification. Positions 681-759 (FPTVHFEQPS…KEDDDPFMSC (79 aa)) are disordered. A compositionally biased stretch (basic and acidic residues) spans 707–719 (VPKRPSLKADIEG).

Belongs to the monovalent cation:proton antiporter 1 (CPA1) transporter (TC 2.A.36) family. In terms of processing, activated by cAMP, protein kinase A and protein kinase C.

Its subcellular location is the basolateral cell membrane. In terms of biological role, involved in pH regulation to eliminate acids generated by active metabolism or to counter adverse environmental conditions. Major proton extruding system driven by the inward sodium ion chemical gradient. The chain is Na(+)/H(+) exchanger beta from Oncorhynchus mykiss (Rainbow trout).